Here is a 148-residue protein sequence, read N- to C-terminus: Large ribosomal subunit protein uL15 (148 aa).

Positions 1–51 are disordered; that stretch reads MNLSNLKPAEGSTKTRKRIGRGPGSGLGGTSTRGHKGAKSRSGYKNKIGFE. The segment covering 21–31 has biased composition (gly residues); that stretch reads RGPGSGLGGTS. Positions 33 to 44 are enriched in basic residues; the sequence is RGHKGAKSRSGY.

The protein belongs to the universal ribosomal protein uL15 family. Part of the 50S ribosomal subunit.

Binds to the 23S rRNA. The sequence is that of Large ribosomal subunit protein uL15 from Parabacteroides distasonis (strain ATCC 8503 / DSM 20701 / CIP 104284 / JCM 5825 / NCTC 11152).